A 470-amino-acid chain; its full sequence is MDVLFEDNAPLSPTTSSLMPSNGDPRLYGNDLNAGDANTSDAFNWTVDAENRTNLSCEGCLSPPCFSLLHLQEKNWSALLTAVVIILTIAGNILVIMAVSLEKKLQNATNYFLMSLAIADMLLGFLVMPVSMLTILYGYRWPLPSKLCAVWIYLDVLFSTASIMHLCAISLDRYVAIQNPIHHSRFNSRTKAFLKIIAVWTISVGISMPIPVFGLQDDSKVFKEGSCLLADDNFVLIGSFVSFFIPLTIMVITYFLTIKSLQKEATLCVSDPGTRAKLASFSFLPQSSLSSEKLFQRSIHREPGSYGRRTMQSISNEQKACKVLGIVFFLFVVMWCPFFITNIMAVICKESCNEDIIGALLNVFVWIGYLSSAVNPLVYTLFNKTYRSAFSRYIQCQYKENKKPLQLILVNTIPALAYKSSQLQMGQKKNSKKDAKSTDNDYSMVALGKQHSEDAPTDNINTVNEKVSCV.

The segment at 1–23 (MDVLFEDNAPLSPTTSSLMPSNG) is disordered. At 1–80 (MDVLFEDNAP…LQEKNWSALL (80 aa)) the chain is on the extracellular side. The span at 10-21 (PLSPTTSSLMPS) shows a compositional bias: low complexity. N38, N44, N51, and N54 each carry an N-linked (GlcNAc...) asparagine glycan. The chain crosses the membrane as a helical span at residues 81 to 97 (TAVVIILTIAGNILVIM). Residues 98–111 (AVSLEKKLQNATNY) lie on the Cytoplasmic side of the membrane. The helical transmembrane segment at 112–137 (FLMSLAIADMLLGFLVMPVSMLTILY) threads the bilayer. At 138-146 (GYRWPLPSK) the chain is on the extracellular side. Residues 147–171 (LCAVWIYLDVLFSTASIMHLCAISL) form a helical membrane-spanning segment. C148 and C227 form a disulfide bridge. Serotonin is bound at residue D155. Residues 172 to 174 (DRY) carry the DRY motif; important for ligand-induced conformation changes motif. Over 172-191 (DRYVAIQNPIHHSRFNSRTK) the chain is Cytoplasmic. Residues 192 to 215 (AFLKIIAVWTISVGISMPIPVFGL) form a helical membrane-spanning segment. The Extracellular portion of the chain corresponds to 216–232 (QDDSKVFKEGSCLLADD). A helical transmembrane segment spans residues 233 to 258 (NFVLIGSFVSFFIPLTIMVITYFLTI). The Cytoplasmic segment spans residues 259-321 (KSLQKEATLC…QSISNEQKAC (63 aa)). Position 280 is a phosphoserine (S280). Residues 322-347 (KVLGIVFFLFVVMWCPFFITNIMAVI) traverse the membrane as a helical segment. Serotonin is bound at residue N342. Cysteines 348 and 352 form a disulfide. Residues 348–355 (CKESCNED) lie on the Extracellular side of the membrane. The chain crosses the membrane as a helical span at residues 356 to 381 (IIGALLNVFVWIGYLSSAVNPLVYTL). Positions 375-379 (NPLVY) match the NPxxY motif; important for ligand-induced conformation changes and signaling motif. At 382-470 (FNKTYRSAFS…NTVNEKVSCV (89 aa)) the chain is on the cytoplasmic side. The short motif at 468–470 (SCV) is the PDZ-binding element.

Belongs to the G-protein coupled receptor 1 family. In terms of assembly, interacts (via C-terminus) with MPDZ and PATJ. May interact (via C-terminus) with MPP3, PRDX6, DLG4, DLG1, CASK, APBA1 and MAGI2. Interacts with GRM2 and DRD2; this may affect signaling. In terms of tissue distribution, ubiquitous.

Its subcellular location is the cell membrane. The protein localises to the cell projection. The protein resides in the dendrite. It localises to the axon. It is found in the cytoplasmic vesicle. Its subcellular location is the membrane. The protein localises to the caveola. The protein resides in the presynapse. Its activity is regulated as follows. G-protein coupled receptor activity is regulated by lipids: oleamide increases HTR2A-mediated activity. Its function is as follows. G-protein coupled receptor for 5-hydroxytryptamine (serotonin). Also functions as a receptor for various drugs and psychoactive substances, including mescaline, psilocybin, 1-(2,5-dimethoxy-4-iodophenyl)-2-aminopropane (DOI) and lysergic acid diethylamide (LSD). Ligand binding causes a conformation change that triggers signaling via guanine nucleotide-binding proteins (G proteins) and modulates the activity of downstream effectors. HTR2A is coupled to G(q)/G(11) G alpha proteins and activates phospholipase C-beta, releasing diacylglycerol (DAG) and inositol 1,4,5-trisphosphate (IP3) second messengers that modulate the activity of phosphatidylinositol 3-kinase and promote the release of Ca(2+) ions from intracellular stores, respectively. Beta-arrestin family members inhibit signaling via G proteins and mediate activation of alternative signaling pathways. Affects neural activity, perception, cognition and mood. Plays a role in the regulation of behavior, including responses to anxiogenic situations and psychoactive substances. Plays a role in intestinal smooth muscle contraction, and may play a role in arterial vasoconstriction. This is 5-hydroxytryptamine receptor 2A (HTR2A) from Canis lupus familiaris (Dog).